A 448-amino-acid chain; its full sequence is Asparagine--tRNA ligase (448 aa).

It belongs to the class-II aminoacyl-tRNA synthetase family. Homodimer.

It is found in the cytoplasm. The catalysed reaction is tRNA(Asn) + L-asparagine + ATP = L-asparaginyl-tRNA(Asn) + AMP + diphosphate + H(+). This Streptococcus thermophilus (strain ATCC BAA-491 / LMD-9) protein is Asparagine--tRNA ligase.